The following is a 750-amino-acid chain: Photosystem I P700 chlorophyll a apoprotein A1 (750 aa).

Transmembrane regions (helical) follow at residues 70 to 93, 156 to 179, 195 to 219, 291 to 309, 346 to 369, 385 to 411, 433 to 455, and 531 to 549; these read VFSA…FHGA, LYCT…FHYH, LNHH…HVSL, IVHH…GHMY, WHAQ…HHMY, LSLF…IFMV, AIIS…LYIH, and FLVH…LILL. [4Fe-4S] cluster is bound by residues Cys573 and Cys582. 2 helical membrane-spanning segments follow: residues 589–610 and 664–686; these read HVFL…HFSW and LSAY…MFLF. His675 serves as a coordination point for chlorophyll a'. Chlorophyll a is bound by residues Met683 and Tyr691. Trp692 contributes to the phylloquinone binding site. Residues 724–744 traverse the membrane as a helical segment; that stretch reads AVGVTHYLLGGIATTWAFFLA.

The protein belongs to the PsaA/PsaB family. In terms of assembly, the PsaA/B heterodimer binds the P700 chlorophyll special pair and subsequent electron acceptors. PSI consists of a core antenna complex that captures photons, and an electron transfer chain that converts photonic excitation into a charge separation. The eukaryotic PSI reaction center is composed of at least 11 subunits. P700 is a chlorophyll a/chlorophyll a' dimer, A0 is one or more chlorophyll a, A1 is one or both phylloquinones and FX is a shared 4Fe-4S iron-sulfur center. serves as cofactor.

It localises to the plastid. The protein localises to the chloroplast thylakoid membrane. The catalysed reaction is reduced [plastocyanin] + hnu + oxidized [2Fe-2S]-[ferredoxin] = oxidized [plastocyanin] + reduced [2Fe-2S]-[ferredoxin]. PsaA and PsaB bind P700, the primary electron donor of photosystem I (PSI), as well as the electron acceptors A0, A1 and FX. PSI is a plastocyanin-ferredoxin oxidoreductase, converting photonic excitation into a charge separation, which transfers an electron from the donor P700 chlorophyll pair to the spectroscopically characterized acceptors A0, A1, FX, FA and FB in turn. Oxidized P700 is reduced on the lumenal side of the thylakoid membrane by plastocyanin. This chain is Photosystem I P700 chlorophyll a apoprotein A1, found in Piper cenocladum (Ant piper).